The chain runs to 548 residues: Acetylcholine receptor subunit alpha-type des-2 (548 aa).

The first 19 residues, 1 to 19 (MLIIIQSLLLATTASLCIA), serve as a signal peptide directing secretion. At 21–239 (TPVPTQIRLV…LTLYLRRKPL (219 aa)) the chain is on the extracellular side. N-linked (GlcNAc...) asparagine glycans are attached at residues Asn52, Asn96, and Asn224. 3 helical membrane-spanning segments follow: residues 240–260 (FYLV…IVGF), 274–294 (VSLG…VSDQ), and 301–321 (FIPL…LGTV). The disordered stretch occupies residues 422 to 460 (LIHLSPTAHQPDESISPSAPPVPSSSPLPPPLTPGPADD). Over residues 439 to 455 (SAPPVPSSSPLPPPLTP) the composition is skewed to pro residues. The helical transmembrane segment at 517–537 (FVIFVVAFLIITFGINFIGFI) threads the bilayer. Over 538–548 (HWHQAGVEYGG) the chain is Cytoplasmic.

It belongs to the ligand-gated ion channel (TC 1.A.9) family. Acetylcholine receptor (TC 1.A.9.1) subfamily. The functional receptor is a heteromer of deg-3 and des-2. Interacts with ric-3; which is required for proper receptor folding.

The protein resides in the cell membrane. Its function is as follows. Subunit of the non-synaptic neuronal acetylcholine receptor (AChR), which may play a role in chemotaxis towards choline. After binding choline or acetylcholine, the AChR responds by an extensive change in conformation that affects all subunits and leads to opening of an ion-conducting channel across the plasma membrane. This chain is Acetylcholine receptor subunit alpha-type des-2 (des-2), found in Caenorhabditis elegans.